The chain runs to 380 residues: Tubby-like F-box protein 9 (380 aa).

Residues 30-76 enclose the F-box domain; the sequence is PFSWSELPEELLREILIRVETVDGGDWPSRRNVVACAGVCRSWRILT. Residues 258–283 form a disordered region; sequence SSRSSPVFRSHSKPLRSNSASCSDSG. Positions 272 to 283 are enriched in polar residues; it reads LRSNSASCSDSG.

It belongs to the TUB family. Part of a SCF (SKP1-cullin-F-box) protein ligase complex. Interacts with SKP1A/ASK1 and XERICO. As to expression, ubiquitous.

It functions in the pathway protein modification; protein ubiquitination. Functionally, component of SCF(ASK-cullin-F-box) E3 ubiquitin ligase complexes, which may mediate the ubiquitination and subsequent proteasomal degradation of target proteins. Confers sensitivity to ABA during seed germination and early seedling development. This chain is Tubby-like F-box protein 9, found in Arabidopsis thaliana (Mouse-ear cress).